Consider the following 420-residue polypeptide: Bone morphogenetic protein 2 (420 aa).

Residues 1–23 (MVAVVRSLMVLLLAQVLLEGATG) form the signal peptide. A propeptide spanning residues 24 to 303 (LIPEVGRRRY…DSVLHTREKR (280 aa)) is cleaved from the precursor. Asn138, Asn167, Asn168, Asn172, and Asn362 each carry an N-linked (GlcNAc...) asparagine glycan. Cystine bridges form between Cys320-Cys385, Cys349-Cys417, and Cys353-Cys419.

The protein belongs to the TGF-beta family. In terms of assembly, homodimer; disulfide-linked.

Its subcellular location is the secreted. Induces cartilage and bone formation. The polypeptide is Bone morphogenetic protein 2 (bmp2) (Tetraodon nigroviridis (Spotted green pufferfish)).